A 98-amino-acid polypeptide reads, in one-letter code: NADH-ubiquinone oxidoreductase chain 4L (98 aa).

The next 3 helical transmembrane spans lie at Thr-2–Phe-22, Leu-26–Ile-46, and Ile-61–Val-81.

It belongs to the complex I subunit 4L family. Core subunit of respiratory chain NADH dehydrogenase (Complex I) which is composed of 45 different subunits.

Its subcellular location is the mitochondrion inner membrane. It catalyses the reaction a ubiquinone + NADH + 5 H(+)(in) = a ubiquinol + NAD(+) + 4 H(+)(out). Core subunit of the mitochondrial membrane respiratory chain NADH dehydrogenase (Complex I) which catalyzes electron transfer from NADH through the respiratory chain, using ubiquinone as an electron acceptor. Part of the enzyme membrane arm which is embedded in the lipid bilayer and involved in proton translocation. This is NADH-ubiquinone oxidoreductase chain 4L (MT-ND4L) from Nyctomys sumichrasti (Sumichrast's vesper rat).